The sequence spans 632 residues: Protein NSP-INTERACTING KINASE 3 (632 aa).

Positions 1–25 (MEGVRFVVWRLGFLVFVWFFDISSA) are cleaved as a signal peptide. Residues 26–238 (TLSPTGVNYE…GTRTNGHHVA (213 aa)) lie on the Extracellular side of the membrane. N96 carries N-linked (GlcNAc...) asparagine glycosylation. 4 LRR repeats span residues 97-121 (LTYL…IGRL), 122-145 (EKLQ…LGEL), 147-168 (NLNY…SLSK), and 169-193 (IEGL…SART). N131, N155, N181, and N210 each carry an N-linked (GlcNAc...) asparagine glycan. A helical transmembrane segment spans residues 239 to 259 (LAFAASFSAAFFVFFTSGMFL). Topologically, residues 260–632 (WWRYRRNKQI…VEAIELSGPR (373 aa)) are cytoplasmic. T298 carries the phosphothreonine modification. One can recognise a Protein kinase domain in the interval 301–584 (FNSKNILGRG…EGDGLAERWE (284 aa)). 307–315 (LGRGGYGIV) contributes to the ATP binding site. T324 carries the post-translational modification Phosphothreonine. ATP is bound at residue K329. Residues S382 and S385 each carry the phosphoserine modification. The tract at residues 415–495 (YLHEQCDPKI…DVFGFGILLL (81 aa)) is interaction with geminivirus NSP protein. The active-site Proton acceptor is D428. Residues T461, T462, and T467 each carry the phosphothreonine modification. Y475 carries the phosphotyrosine modification. S477 bears the Phosphoserine mark. A Phosphothreonine modification is found at T478. A Phosphoserine modification is found at S482. T557 bears the Phosphothreonine mark.

Belongs to the protein kinase superfamily. Ser/Thr protein kinase family. In terms of assembly, oligomer. Interacts with geminivirus nuclear shuttle protein (NSP). In terms of processing, autophosphorylated. Expressed in seedlings, leaves and flowers.

It is found in the cell membrane. It carries out the reaction L-seryl-[protein] + ATP = O-phospho-L-seryl-[protein] + ADP + H(+). It catalyses the reaction L-threonyl-[protein] + ATP = O-phospho-L-threonyl-[protein] + ADP + H(+). With respect to regulation, inhibited by the viral nuclear shuttle protein (NSP) that binds to the region required for oligomerization. Involved in defense response to geminivirus infection. The protein is Protein NSP-INTERACTING KINASE 3 (NIK3) of Arabidopsis thaliana (Mouse-ear cress).